The sequence spans 255 residues: MKKKLGLLAMVVALMAITAGCSEVNQPITPKSTGIWNEYFVYPLSQLITYFANLFGSNYGLAIVVTTLIIRFALLPLMIKQTKSTKAMQALQPEMVKLKEKYSSKDQATQQKLQQEMMQLYQKNGVNPLAGCLPIFVQMPILFAFYHAIMRTSEISKHTFLWFDLGQADPYYILPVVAAITTFIQQKLAMAGTAGQNPQMAMMLWLMPIMILIFAINFPAALSLYWVVGNIFGIAQMYLIKGPEIKASKAGGSSK.

The N-terminal stretch at 1–20 (MKKKLGLLAMVVALMAITAG) is a signal peptide. Cysteine 21 is lipidated: N-palmitoyl cysteine. Cysteine 21 carries the S-diacylglycerol cysteine lipid modification. A run of 5 helical transmembrane segments spans residues 59–79 (YGLAIVVTTLIIRFALLPLMI), 129–149 (LAGCLPIFVQMPILFAFYHAI), 160–180 (FLWFDLGQADPYYILPVVAAI), 202–222 (MMLWLMPIMILIFAINFPAAL), and 223–243 (SLYWVVGNIFGIAQMYLIKGP).

This sequence belongs to the OXA1/ALB3/YidC family. Type 2 subfamily.

The protein localises to the cell membrane. Required for the insertion and/or proper folding and/or complex formation of integral membrane proteins into the membrane. Involved in integration of membrane proteins that insert both dependently and independently of the Sec translocase complex, as well as at least some lipoproteins. In Bacillus anthracis, this protein is Membrane protein insertase YidC 2.